The chain runs to 372 residues: Pyrimidine monooxygenase RutA (372 aa).

FMN-binding positions include 57 to 58, asparagine 123, glutamate 132, 148 to 149, and serine 198; these read IK and RY.

Belongs to the NtaA/SnaA/DszA monooxygenase family. RutA subfamily.

The catalysed reaction is uracil + FMNH2 + NADH + O2 = (Z)-3-ureidoacrylate + FMN + NAD(+) + H2O + H(+). It carries out the reaction thymine + FMNH2 + NADH + O2 = (Z)-2-methylureidoacrylate + FMN + NAD(+) + H2O + H(+). Functionally, catalyzes the pyrimidine ring opening between N-3 and C-4 by an unusual flavin hydroperoxide-catalyzed mechanism, adding oxygen atoms in the process to yield ureidoacrylate peracid, that immediately reacts with FMN forming ureidoacrylate and FMN-N(5)-oxide. The FMN-N(5)-oxide reacts spontaneously with NADH to produce FMN. Requires the flavin reductase RutF to regenerate FMN in vivo. The protein is Pyrimidine monooxygenase RutA of Methylorubrum extorquens (strain PA1) (Methylobacterium extorquens).